The following is a 333-amino-acid chain: Mitochondrial glycine transporter (333 aa).

Solcar repeat units follow at residues 10–93, 125–209, and 235–319; these read SKST…IRQS, LSNT…GKKR, and HAAS…LIRR. A run of 2 helical transmembrane segments spans residues 16-41 and 68-94; these read FAAG…TRVQ and GAVP…RQSA. Residues 98-126 form a disordered region; that stretch reads SPLPSSSSSTTTSSSTTTSSSSSSLPKLS. A run of 4 helical transmembrane segments spans residues 131–156, 184–207, 239–265, and 294–312; these read LLAG…VRYE, GYGA…EQGK, INFA…KTRI, and GLAL…AWTV.

Belongs to the mitochondrial carrier (TC 2.A.29) family. SLC25A38 subfamily.

It is found in the mitochondrion inner membrane. It carries out the reaction glycine(in) = glycine(out). Mitochondrial glycine transporter that imports glycine into the mitochondrial matrix. Plays an important role in providing glycine for the first enzymatic step in heme biosynthesis, the condensation of glycine with succinyl-CoA to produce 5-aminolevulinate (ALA) in the mitochondrial matrix. The chain is Mitochondrial glycine transporter from Chaetomium globosum (strain ATCC 6205 / CBS 148.51 / DSM 1962 / NBRC 6347 / NRRL 1970) (Soil fungus).